We begin with the raw amino-acid sequence, 904 residues long: Dual specificity tyrosine-phosphorylation-regulated kinase mbk-1 (904 aa).

Disordered stretches follow at residues 1 to 151, 250 to 272, and 285 to 345; these read MNSG…MPPE, TVGR…ASSS, and AVPN…YNNG. Residues 9 to 23 are compositionally biased toward polar residues; that stretch reads NLQAWGQQPSSSYSN. Low complexity predominate over residues 24–35; the sequence is TQQQHGQITGQI. The segment covering 59 to 75 has biased composition (basic and acidic residues); the sequence is ELEKSKKIAEQPTEHPQ. A compositionally biased stretch (low complexity) spans 112–123; it reads NNSNSQNFFPQQ. Polar residues predominate over residues 286–297; that stretch reads VPNTSSSGNQPH. The 324-residue stretch at 367–690 folds into the Protein kinase domain; sequence ILSDTPVGKG…TLFPVSHTAY (324 aa). Residues 373 to 381 and lysine 396 each bind ATP; that span reads VGKGSFGQV. Aspartate 495 functions as the Proton acceptor in the catalytic mechanism. 2 disordered regions span residues 717–830 and 881–904; these read YRPV…DQAE and MSHG…NNKL. Residues 721 to 733 are compositionally biased toward polar residues; that stretch reads PTSSHPISVTSSF. Residues 749-820 are compositionally biased toward low complexity; sequence SQQNYHNPNY…VQQHSSSSSR (72 aa). Polar residues predominate over residues 881-890; sequence MSHGNVNAGS. Residues 892-904 show a composition bias toward basic and acidic residues; sequence RDMEKHDYPNNKL.

The protein belongs to the protein kinase superfamily. CMGC Ser/Thr protein kinase family. MNB/DYRK subfamily. Requires Mg(2+) as cofactor.

The protein localises to the nucleus. The catalysed reaction is L-seryl-[protein] + ATP = O-phospho-L-seryl-[protein] + ADP + H(+). The enzyme catalyses L-threonyl-[protein] + ATP = O-phospho-L-threonyl-[protein] + ADP + H(+). It catalyses the reaction L-tyrosyl-[protein] + ATP = O-phospho-L-tyrosyl-[protein] + ADP + H(+). Its function is as follows. Possible role in the function of olfactory neurons. The polypeptide is Dual specificity tyrosine-phosphorylation-regulated kinase mbk-1 (Caenorhabditis briggsae).